A 429-amino-acid polypeptide reads, in one-letter code: ETS domain-containing protein Elk-1 (429 aa).

A DNA-binding region (ETS) is located at residues 5-86 (VTLWQFLLQL…SGQKFVYKFV (82 aa)). 3 disordered regions span residues 119 to 146 (HAGP…GLAR), 165 to 204 (SLQP…SPNP), and 227 to 253 (APNQ…KVEG). The segment covering 169-178 (QPQPPIPPRP) has biased composition (pro residues). Residues Lys-231, Lys-250, and Lys-255 each participate in a glycyl lysine isopeptide (Lys-Gly) (interchain with G-Cter in SUMO) cross-link. Residues 302-312 (STSTTEITQPQ) show a composition bias toward polar residues. Positions 302 to 354 (STSTTEITQPQKGRKPRDLELPLSPSLLGGQGPERTPGSGTSSGLQAPGPALT) are disordered. The residue at position 325 (Ser-325) is a Phosphoserine; by MAPK1. A phosphothreonine; by MAPK1 mark is found at Thr-337, Thr-354, Thr-364, and Thr-369. A sufficient for interaction with MAD2L2 region spans residues 350-400 (GPALTPSLLPTHTLTPVLLTPSSLPPSIHFWSTLSPIAPRSPAKLSFQFPS). Thr-382 carries an O-linked (GlcNAc) threonine glycan. Ser-384 is modified (phosphoserine; by MAPK1 and MAPK8). Residue Ser-390 is modified to Phosphoserine; by MAPK1. Phosphothreonine; by MAPK1 is present on Thr-418. The residue at position 423 (Ser-423) is a Phosphoserine; by MAPK1.

Belongs to the ETS family. In terms of assembly, interacts in its sumoylated form with PIAS2/PIASX which enhances its transcriptional activator activity. Interacts with MAD2L2; the interaction is direct and promotes phosphorylation by the kinases MAPK8 and/or MAPK9. Interacts with POU1F1. In terms of processing, sumoylation represses transcriptional activator activity as it results in recruitment of HDAC2 to target gene promoters which leads to decreased histone acetylation and reduced transactivator activity. It also regulates nuclear retention. On mitogenic stimulation, phosphorylated on C-terminal serine and threonine residues by MAPK1 but also MAPK8 and/or MAPK9. Phosphorylation leads to loss of sumoylation and restores transcriptional activator activity. Phosphorylated and activated by CaMK4, MAPK11, MAPK12 and MAPK14. Upon bFGF stimulus, phosphorylated by PAK1. Phosphorylated by PRP4K at Thr-418; phosphorylation activation ELK1 transcriptional activity. Predominantly expressed in the brain, and to a lesser extent in the heart, liver and muscle.

It localises to the nucleus. In terms of biological role, transcription factor that binds to purine-rich DNA sequences. Forms a ternary complex with SRF and the ETS and SRF motifs of the serum response element (SRE) on the promoter region of immediate early genes such as FOS and IER2. Induces target gene transcription upon JNK and MAPK-signaling pathways stimulation. In Mus musculus (Mouse), this protein is ETS domain-containing protein Elk-1.